The primary structure comprises 284 residues: Short-chain dehydrogenase RED1 (284 aa).

The NADP(+) site is built by isoleucine 11, threonine 37, aspartate 58, asparagine 86, tyrosine 151, lysine 155, valine 184, and threonine 186. Catalysis depends on tyrosine 151, which acts as the Proton acceptor. Residue lysine 155 is the Lowers pKa of active site Tyr of the active site.

It belongs to the short-chain dehydrogenases/reductases (SDR) family.

It participates in polyketide biosynthesis. In terms of biological role, short-chain dehydrogenase; part of the gene cluster that mediates the biosynthesis of pyriculol and pyriculariol, two heptaketides that induce lesion formation upon application on rice leaves but are dispensable for pathogenicity. The highly reducing polyketide synthase synthesizes the heptaketide backbone of pyriculol and pyriculariol. Pyriculol and pyriculariol contain several hydroxyl moieties and double bonds, so it can be assumed that several reduction steps occur during biosynthesis. These reactions could be executed by PKS19 itself or partly by the tailoring enzymes OXR1, OXR2, RED1, RED2 or RED3, identified within the cluster. The FAD-linked oxidoreductase OXR1 is the only tailoring enzyme for which the function has been determined yet, and is involved in the oxidation of dihydropyriculol and dihydropyriculariol into pyriculol and pyriculariol, respectively. In Pyricularia oryzae (strain 70-15 / ATCC MYA-4617 / FGSC 8958) (Rice blast fungus), this protein is Short-chain dehydrogenase RED1.